The primary structure comprises 305 residues: Probable lipid kinase YegS-like (305 aa).

The DAGKc domain occupies 1–129 (MSERKALLIL…IDLGEVGGQI (129 aa)). Residues T39, 65–71 (GDGTLRD), and T92 contribute to the ATP site. The Mg(2+) site is built by L210, D213, and L215. The active-site Proton acceptor is E268.

This sequence belongs to the diacylglycerol/lipid kinase family. YegS lipid kinase subfamily. It depends on Mg(2+) as a cofactor. Requires Ca(2+) as cofactor.

It localises to the cytoplasm. Functionally, probably phosphorylates lipids; the in vivo substrate is unknown. In Pseudomonas fluorescens (strain Pf0-1), this protein is Probable lipid kinase YegS-like.